The following is a 103-amino-acid chain: N(4)-acetylcytidine amidohydrolase (103 aa).

Positions 6–101 (ITFFQRFQDD…QIQFYVIEFK (96 aa)) constitute an ASCH domain. The Proton acceptor role is filled by Lys21. The Nucleophile role is filled by Thr24. Catalysis depends on Glu74, which acts as the Proton donor.

This sequence belongs to the N(4)-acetylcytidine amidohydrolase family.

It carries out the reaction N(4)-acetylcytidine + H2O = cytidine + acetate + H(+). It catalyses the reaction N(4)-acetyl-2'-deoxycytidine + H2O = 2'-deoxycytidine + acetate + H(+). The catalysed reaction is N(4)-acetylcytosine + H2O = cytosine + acetate + H(+). Its function is as follows. Catalyzes the hydrolysis of N(4)-acetylcytidine (ac4C). The chain is N(4)-acetylcytidine amidohydrolase (yqfB) from Escherichia coli (strain SMS-3-5 / SECEC).